Here is a 482-residue protein sequence, read N- to C-terminus: QWRF motif-containing protein 3 (482 aa).

The span at 1–20 shows a compositional bias: basic and acidic residues; the sequence is MKSCEHELLKTRRGKSREVS. Disordered stretches follow at residues 1–60 and 171–220; these read MKSC…GLKK and TAKP…QWAL. Residues 21–42 are compositionally biased toward low complexity; it reads SRFLSSPSASSSPNRRNSTSNS. A compositionally biased stretch (polar residues) spans 191-219; sequence RTNSSKGIENRLQRNNSVSRYGSSMSQWA. The QWRF motif signature appears at 292 to 295; it reads QWRF.

This sequence belongs to the QWRF family.

The protein is QWRF motif-containing protein 3 (QWRF3) of Arabidopsis thaliana (Mouse-ear cress).